The primary structure comprises 411 residues: Carbamoyl phosphate synthase arginine-specific small chain (411 aa).

Positions 50, 232, and 234 each coordinate L-glutamine. The region spanning 185–376 (NVALIDCGVK…FDNIEKYQLQ (192 aa)) is the Glutamine amidotransferase type-1 domain. Residue cysteine 264 is the Nucleophile of the active site. Positions 265, 268, 306, 308, and 309 each coordinate L-glutamine. Catalysis depends on residues histidine 349 and glutamate 351.

Belongs to the CarA family. In terms of assembly, heterodimer composed of 2 chains; the small (or glutamine) chain promotes the hydrolysis of glutamine to ammonia, which is used by the large (or ammonia) chain to synthesize carbamoyl phosphate.

The protein localises to the cytoplasm. The catalysed reaction is hydrogencarbonate + L-glutamine + 2 ATP + H2O = carbamoyl phosphate + L-glutamate + 2 ADP + phosphate + 2 H(+). It catalyses the reaction L-glutamine + H2O = L-glutamate + NH4(+). It participates in amino-acid biosynthesis; L-arginine biosynthesis; carbamoyl phosphate from bicarbonate: step 1/1. Small subunit of the arginine-specific carbamoyl phosphate synthase (CPSase). CPSase catalyzes the formation of carbamoyl phosphate from the ammonia moiety of glutamine, carbonate, and phosphate donated by ATP, constituting the first step of 2 biosynthetic pathways, one leading to arginine and/or urea and the other to pyrimidine nucleotides. The small subunit (glutamine amidotransferase) binds and cleaves glutamine to supply the large subunit with the substrate ammonia. This is Carbamoyl phosphate synthase arginine-specific small chain (CPA1) from Saccharomyces cerevisiae (strain ATCC 204508 / S288c) (Baker's yeast).